The following is a 387-amino-acid chain: Putative glutamate--cysteine ligase 2 (387 aa).

The protein belongs to the glutamate--cysteine ligase type 2 family. YbdK subfamily.

It catalyses the reaction L-cysteine + L-glutamate + ATP = gamma-L-glutamyl-L-cysteine + ADP + phosphate + H(+). In terms of biological role, ATP-dependent carboxylate-amine ligase which exhibits weak glutamate--cysteine ligase activity. This is Putative glutamate--cysteine ligase 2 from Pseudomonas fluorescens (strain ATCC BAA-477 / NRRL B-23932 / Pf-5).